We begin with the raw amino-acid sequence, 169 residues long: Disulfide bond formation protein B (169 aa).

At 1 to 13 (MQSLISFAHSRLS) the chain is on the cytoplasmic side. The helical transmembrane segment at 14 to 30 (WGILALSALALESAALY) threads the bilayer. The Periplasmic segment spans residues 31–48 (FQHIMKLDPCVMCIYQRV). Cys-40 and Cys-43 form a disulfide bridge. Residues 49–64 (AVFGLLGAGLFGFMAP) form a helical membrane-spanning segment. Residues 65–71 (ANRVIRA) are Cytoplasmic-facing. A helical transmembrane segment spans residues 72–89 (LGALLWGISAAWGLKLAL). The Periplasmic portion of the chain corresponds to 90–144 (ELVDMQNNPNPFSTCSFLPEFPSWLQLHEWLPSVFMPTGMCTDIPWEFAGVTMGE). Cys-104 and Cys-130 are disulfide-bonded. The chain crosses the membrane as a helical span at residues 145-163 (WMIVAFSVYLLAWLAFIVP). The Cytoplasmic segment spans residues 164 to 169 (MLKKSA).

This sequence belongs to the DsbB family.

The protein resides in the cell inner membrane. In terms of biological role, required for disulfide bond formation in some periplasmic proteins. Acts by oxidizing the DsbA protein. This Shewanella amazonensis (strain ATCC BAA-1098 / SB2B) protein is Disulfide bond formation protein B.